The chain runs to 1482 residues: Cystic fibrosis transmembrane conductance regulator (1482 aa).

Over 1–77 (MQRSPLEKAS…KLINALRRCF (77 aa)) the chain is Cytoplasmic. Residues 78-98 (FWRFTFYGIILYLGEVTKAVQ) form a helical membrane-spanning segment. In terms of domain architecture, ABC transmembrane type-1 1 spans 81 to 365 (FTFYGIILYL…WAVQTWYDSL (285 aa)). Residues 99 to 122 (PLLLGRIIASYDPDNKVERSIAIY) are Extracellular-facing. The helical transmembrane segment at 123 to 146 (LAVGLCLLFVVRTLLLHPAIFGLH) threads the bilayer. Over 147–195 (HIGMQMRIAMFSLIYKKTLKLSSRVLDKISIGQLVSLLSNNLNKFDEGL) the chain is Cytoplasmic. Residues 196 to 216 (ALAHFVWIAPLQVTLLMGLLW) traverse the membrane as a helical segment. The Extracellular segment spans residues 217 to 222 (DLLQAS). Residues 223–243 (AFSGLGVLIILACFQAGFGRM) traverse the membrane as a helical segment. The Cytoplasmic segment spans residues 244 to 298 (MMKYRDQRAGKINERLVITSEMIENIQSVKAYCWEEALEKMIENFRQSELRLTRK). The chain crosses the membrane as a helical span at residues 299 to 319 (AAYVRYFNSSAFFFSGFFVVF). Over 320-339 (LSVLPYALIKGIILRKIFTT) the chain is Extracellular. A helical membrane pass occupies residues 340–358 (ISFCIVLRMAVTRQFPWAV). The Cytoplasmic segment spans residues 359–859 (QTWYDSLGAI…YLRYITVHKR (501 aa)). Residues tryptophan 401, serine 434, 458–465 (GSTGAGKT), and glutamine 493 each bind ATP. Residues 423–646 (NVDNSLFFSN…RPDFSSKLMG (224 aa)) form the ABC transporter 1 domain. Cysteine 524 is lipidated: S-palmitoyl cysteine. Phosphoserine occurs at positions 549 and 660. Residues 654–832 (SAERRNSIIT…EEINEEDLKE (179 aa)) form a disordered R region region. A Phosphoserine; by PKA modification is found at serine 670. Serine 686 bears the Phosphoserine mark. Lysine 688 participates in a covalent cross-link: Glycyl lysine isopeptide (Lys-Gly) (interchain with G-Cter in ubiquitin). Serine 700 and serine 712 each carry phosphoserine. The residue at position 717 (threonine 717) is a Phosphothreonine. Phosphoserine occurs at positions 737, 768, 796, and 814. The helical transmembrane segment at 860-880 (LIFVLIWCFVVFLIEVAASLV) threads the bilayer. Positions 860–1156 (LIFVLIWCFV…AVNSSIDVDS (297 aa)) constitute an ABC transmembrane type-1 2 domain. Residues 881 to 919 (LLCLLSKVSPEDKGNTTKSANDSSAVIITSTSSFYFLYI) are Extracellular-facing. 2 N-linked (GlcNAc...) asparagine glycosylation sites follow: asparagine 895 and asparagine 901. A discontinuously helical transmembrane segment spans residues 920–940 (YVGVADTFLALGLFRGLPLVH). Residues 941-991 (TLITVSKILHHKMLHSVLQAPMSTLNTLKAGGILNRFSKDIAILDDLLPLT) lie on the Cytoplasmic side of the membrane. The helical transmembrane segment at 992 to 1012 (IFDFIQLLLIVIGAVAVVSIL) threads the bilayer. The Extracellular segment spans residues 1013 to 1014 (KP). A helical transmembrane segment spans residues 1015-1035 (YIFLATVPVIVAFVLLRAYFL). Residues 1036 to 1096 (HTSQQLKQLE…TANWFLYLST (61 aa)) are Cytoplasmic-facing. Residues 1097–1117 (LRWFQMRIEMIFVIFFIAVTF) traverse the membrane as a helical segment. At 1118-1131 (ISILTTGEGEGTVG) the chain is on the extracellular side. A helical membrane pass occupies residues 1132 to 1152 (IILTLAMNIMSTLQWAVNSSI). Topologically, residues 1153 to 1482 (DVDSLMRSVS…TEEEVQDTRL (330 aa)) are cytoplasmic. The ABC transporter 2 domain occupies 1212–1445 (MTVKDLTAKY…KSLFRQAISP (234 aa)). ATP is bound by residues tyrosine 1221 and 1246–1253 (GRTGSGKS). An interaction with GORASP2 region spans residues 1388–1482 (RTLKQAFADC…TEEEVQDTRL (95 aa)). A lipid anchor (S-palmitoyl cysteine) is attached at cysteine 1397. Serine 1446 is modified (phosphoserine). The disordered stretch occupies residues 1450–1482 (KLFPHQNSGKHKSRSKITALKEETEEEVQDTRL). The segment covering 1472–1482 (ETEEEVQDTRL) has biased composition (acidic residues). A PDZ-binding motif is present at residues 1480 to 1482 (TRL).

It belongs to the ABC transporter superfamily. ABCC family. CFTR transporter (TC 3.A.1.202) subfamily. In terms of assembly, monomer; does not require oligomerization for channel activity. May form oligomers in the membrane. Interacts with SLC26A3, SLC26A6 and NHERF1. Interacts with SHANK2. Interacts with MYO6. Interacts (via C-terminus) with GOPC (via PDZ domain); this promotes CFTR internalization and thereby decreases channel activity. Interacts with SLC4A7 through NHERF1. Found in a complex with MYO5B and RAB11A. Interacts with ANO1. Interacts with SLC26A8. Interacts with AHCYL1; the interaction increases CFTR activity. Interacts with CSE1L. The core-glycosylated form interacts with GORASP2 (via PDZ GRASP-type 1 domain) in respone to ER stress. Interacts with MARCHF2; the interaction leads to CFTR ubiqtuitination and degradation. Interacts with ADGRG2. N-glycosylated. Post-translationally, phosphorylated; cAMP treatment promotes phosphorylation and activates the channel. Dephosphorylation decreases the ATPase activity (in vitro). Phosphorylation at PKA sites activates the channel. Phosphorylation at PKC sites enhances the response to phosphorylation by PKA. Phosphorylated by AMPK; this inhibits channel activity. In terms of processing, ubiquitinated, leading to its degradation in the lysosome. Deubiquitination by USP10 in early endosomes enhances its endocytic recycling to the cell membrane. Ubiquitinated by RNF185 during ER stress. Ubiquitinated by MARCHF2.

It is found in the apical cell membrane. The protein resides in the early endosome membrane. The protein localises to the cell membrane. Its subcellular location is the recycling endosome membrane. It localises to the endoplasmic reticulum membrane. It is found in the nucleus. The enzyme catalyses ATP + H2O + closed Cl(-) channel = ADP + phosphate + open Cl(-) channel.. The catalysed reaction is chloride(in) = chloride(out). It catalyses the reaction hydrogencarbonate(in) = hydrogencarbonate(out). It carries out the reaction ATP + H2O = ADP + phosphate + H(+). Its function is as follows. Epithelial ion channel that plays an important role in the regulation of epithelial ion and water transport and fluid homeostasis. Mediates the transport of chloride ions across the cell membrane. Possesses an intrinsic ATPase activity and utilizes ATP to gate its channel; the passive flow of anions through the channel is gated by cycles of ATP binding and hydrolysis by the ATP-binding domains. The ion channel is also permeable to HCO(3)(-); selectivity depends on the extracellular chloride concentration. Exerts its function also by modulating the activity of other ion channels and transporters. Contributes to the regulation of the pH and the ion content of the epithelial fluid layer. Modulates the activity of the epithelial sodium channel (ENaC) complex, in part by regulating the cell surface expression of the ENaC complex. May regulate bicarbonate secretion and salvage in epithelial cells by regulating the transporter SLC4A7. Can inhibit the chloride channel activity of ANO1. Plays a role in the chloride and bicarbonate homeostasis during sperm epididymal maturation and capacitation. The protein is Cystic fibrosis transmembrane conductance regulator of Dasypus novemcinctus (Nine-banded armadillo).